The primary structure comprises 414 residues: Serine hydroxymethyltransferase (414 aa).

(6S)-5,6,7,8-tetrahydrofolate-binding positions include L118 and G122–L124. K227 bears the N6-(pyridoxal phosphate)lysine mark. Residues E240 and S350–F352 contribute to the (6S)-5,6,7,8-tetrahydrofolate site.

It belongs to the SHMT family. As to quaternary structure, homodimer. Pyridoxal 5'-phosphate is required as a cofactor.

It localises to the cytoplasm. It carries out the reaction (6R)-5,10-methylene-5,6,7,8-tetrahydrofolate + glycine + H2O = (6S)-5,6,7,8-tetrahydrofolate + L-serine. It functions in the pathway one-carbon metabolism; tetrahydrofolate interconversion. The protein operates within amino-acid biosynthesis; glycine biosynthesis; glycine from L-serine: step 1/1. Its function is as follows. Catalyzes the reversible interconversion of serine and glycine with tetrahydrofolate (THF) serving as the one-carbon carrier. This reaction serves as the major source of one-carbon groups required for the biosynthesis of purines, thymidylate, methionine, and other important biomolecules. Also exhibits THF-independent aldolase activity toward beta-hydroxyamino acids, producing glycine and aldehydes, via a retro-aldol mechanism. The polypeptide is Serine hydroxymethyltransferase (Bacillus cereus (strain ZK / E33L)).